The primary structure comprises 891 residues: Transportin-1 (891 aa).

19 HEAT repeats span residues 14–40 (GLRE…QQLQ), 45–83 (FPDF…ATFS), 92–125 (YVKS…IVRV), 131–168 (LFQA…LDVD), 178–208 (NVFM…QYIV), 221–248 (YLQG…VQLI), 260–287 (KNVT…FWSA), 303–381 (PRLI…LSNV), 389–420 (TLMP…GAIA), 432–459 (PQIV…TLSR), 477–510 (FDKI…EEEA), 518–551 (LGII…ADAV), 559–597 (KYLD…QALG), 605–653 (EPVF…GLGA), 664–695 (LRDI…RVCP), 703–740 (QEFL…IKIG), 748–784 (ITVV…WVCP), 792–825 (DHFM…VAAN), and 834–866 (TFIC…KQML). The Importin N-terminal domain maps to 35–103 (IWQQLQHYSQ…KSELLPCIGA (69 aa)). Positions 317 to 330 (DDDESLADAEEDES) are enriched in acidic residues. The disordered stretch occupies residues 317 to 337 (DDDESLADAEEDESFPDRDQD).

Belongs to the importin beta family. Importin beta-2 subfamily.

The protein localises to the cytoplasm. It localises to the nucleus. Its subcellular location is the nucleoplasm. Functions in nuclear protein import as nuclear transport receptor. Serves as receptor for nuclear localization signals (NLS) in cargo substrates. Is thought to mediate docking of the importin/substrate complex to the nuclear pore complex (NPC) through binding to nucleoporin and the complex is subsequently translocated through the pore by an energy requiring, Ran-dependent mechanism. At the nucleoplasmic side of the NPC, Ran binds to the importin, the importin/substrate complex dissociates and importin is re-exported from the nucleus to the cytoplasm where GTP hydrolysis releases Ran. The directionality of nuclear import is thought to be conferred by an asymmetric distribution of the GTP- and GDP-bound forms of Ran between the cytoplasm and nucleus. This Oryza sativa subsp. japonica (Rice) protein is Transportin-1 (TRN1).